A 90-amino-acid chain; its full sequence is YcgL domain-containing protein YE2368 (90 aa).

Residues 1 to 85 (MLCAIYRSPK…PPESLLKMHL (85 aa)) enclose the YcgL domain.

The protein is YcgL domain-containing protein YE2368 of Yersinia enterocolitica serotype O:8 / biotype 1B (strain NCTC 13174 / 8081).